We begin with the raw amino-acid sequence, 307 residues long: 4-hydroxythreonine-4-phosphate dehydrogenase (307 aa).

His126 and Thr127 together coordinate substrate. His156, His195, and His251 together coordinate a divalent metal cation. Residues Lys259, Asn268, and Arg277 each coordinate substrate.

The protein belongs to the PdxA family. As to quaternary structure, homodimer. It depends on Zn(2+) as a cofactor. Mg(2+) serves as cofactor. Co(2+) is required as a cofactor.

It localises to the cytoplasm. It catalyses the reaction 4-(phosphooxy)-L-threonine + NAD(+) = 3-amino-2-oxopropyl phosphate + CO2 + NADH. It participates in cofactor biosynthesis; pyridoxine 5'-phosphate biosynthesis; pyridoxine 5'-phosphate from D-erythrose 4-phosphate: step 4/5. Its function is as follows. Catalyzes the NAD(P)-dependent oxidation of 4-(phosphooxy)-L-threonine (HTP) into 2-amino-3-oxo-4-(phosphooxy)butyric acid which spontaneously decarboxylates to form 3-amino-2-oxopropyl phosphate (AHAP). The chain is 4-hydroxythreonine-4-phosphate dehydrogenase from Helicobacter pylori (strain Shi470).